We begin with the raw amino-acid sequence, 495 residues long: Membrane-bound glycerophospholipid O-acyltransferase 1 (495 aa).

6 consecutive transmembrane segments (helical) span residues 34–54, 70–90, 126–146, 180–200, 238–258, and 297–317; these read VNFVVCQLVALFAAFWFRIYL, IFGIYFVIFCFGWYSVHLFVL, IYIFHYGILTTDFSGPLMIVT, PSFLEYLSYLLNFMSVIAGPC, TGAVIHKLGITLVSLLLFLTL, and YFAWTLADAVNNAAGFGFSGV. Active-site residues include Asn-350 and His-381. Helical transmembrane passes span 371–391, 426–446, and 450–470; these read VLTFILSALWHGVYPGYYFTF, TWAVTQLAVSYTVAPFVMLAV, and ISLYKSMYFYLHIISLLIILF. The residue at position 488 (Ser-488) is a Phosphoserine.

The protein belongs to the membrane-bound acyltransferase family. In terms of tissue distribution, expressed in neutrophils.

The protein resides in the endoplasmic reticulum membrane. The catalysed reaction is a 1-acyl-sn-glycero-3-phospho-L-serine + an acyl-CoA = a 1,2-diacyl-sn-glycero-3-phospho-L-serine + CoA. It catalyses the reaction a 1-acyl-sn-glycero-3-phosphocholine + an acyl-CoA = a 1,2-diacyl-sn-glycero-3-phosphocholine + CoA. The enzyme catalyses a 1-acyl-sn-glycero-3-phosphoethanolamine + an acyl-CoA = a 1,2-diacyl-sn-glycero-3-phosphoethanolamine + CoA. It carries out the reaction 1-(9Z-octadecenoyl)-sn-glycero-3-phospho-L-serine + (9Z)-octadecenoyl-CoA = 1,2-di-(9Z)-octadecenoyl-sn-glycero-3-phospho-L-serine + CoA. The catalysed reaction is 1-(9Z-octadecenoyl)-sn-glycero-3-phospho-L-serine + octadecanoyl-CoA = 1-(9Z-octadecenoyl)-2-octadecanoyl-sn-glycero-3-phospho-L-serine + CoA. It catalyses the reaction 1-(9Z-octadecenoyl)-sn-glycero-3-phospho-L-serine + (9Z)-hexadecenoyl-CoA = 1-(9Z-octadecenoyl)-2-(9Z-hexadecenoyl)-sn-glycero-3-phospho-L-serine + CoA. The enzyme catalyses 1-(9Z-octadecenoyl)-sn-glycero-3-phospho-L-serine + (9Z,12Z)-octadecadienoyl-CoA = 1-(9Z-octadecenoyl)-2-(9Z,12Z-octadienoyl)-sn-glycero-3-phospho-L-serine + CoA. It carries out the reaction 1-hexadecanoyl-sn-glycero-3-phosphocholine + (9Z)-octadecenoyl-CoA = 1-hexadecanoyl-2-(9Z-octadecenoyl)-sn-glycero-3-phosphocholine + CoA. The catalysed reaction is a 1-O-(1Z-alkenyl)-sn-glycero-3-phosphoethanolamine + (9Z)-octadecenoyl-CoA = 1-O-(1Z)-alkenyl-2-(9Z)-octadecenoyl-sn-glycero-3-phosphoethanolamine + CoA. It catalyses the reaction 1-octadecanoyl-sn-glycero-3-phosphoethanolamine + (9Z)-octadecenoyl-CoA = 1-octadecanoyl-2-(9Z-octadecenoyl)-sn-glycero-3-phosphoethanolamine + CoA. The enzyme catalyses 1-(9Z-octadecenoyl)-sn-glycero-3-phosphoethanolamine + (9Z)-octadecenoyl-CoA = 1,2-di-(9Z-octadecenoyl)-sn-glycero-3-phosphoethanolamine + CoA. It carries out the reaction 1-hexadecanoyl-sn-glycero-3-phosphoethanolamine + (9Z)-octadecenoyl-CoA = 1-hexadecanoyl-2-(9Z-octadecenoyl)-sn-glycero-3-phosphoethanolamine + CoA. The catalysed reaction is 1-(10Z-heptadecenoyl)-sn-glycero-3-phosphoethanolamine + hexadecanoyl-CoA = 1-(10Z-heptadecenoyl)-2-hexadecanoyl-sn-glycero-3-phosphoethanolamine + CoA. It catalyses the reaction 1-(10Z-heptadecenoyl)-sn-glycero-3-phosphoethanolamine + (9Z)-octadecenoyl-CoA = 1-(10Z-heptadecenoyl)-2-(9Z-octadecenoyl)-sn-glycero-3-phosphoethanolamine + CoA. The protein operates within lipid metabolism; phospholipid metabolism. Partially inhibited by thimerosal. Acyltransferase which catalyzes the transfer of an acyl group from an acyl-CoA towards a lysophospholipid producing a phospholipid and participates in the reacylation step of the phospholipid remodeling pathway also known as the Lands cycle. Acts on lysophosphatidylserine (1-acyl-2-hydroxy-sn-glycero-3-phospho-L-serine or LPS) and lysophosphatidylethanolamine (1-acyl-sn-glycero-3-phosphoethanolamine or LPE), and to a lesser extend lysophosphatidylcholine. Prefers oleoyl-CoA as the acyl donor and 1-oleoyl-LPE as acceptor. May play a role in neurite outgrowth during neuronal differentiation. This Homo sapiens (Human) protein is Membrane-bound glycerophospholipid O-acyltransferase 1.